A 235-amino-acid chain; its full sequence is Carboxy-S-adenosyl-L-methionine synthase (235 aa).

S-adenosyl-L-methionine is bound by residues tyrosine 35, 60–62, 83–84, asparagine 124, and arginine 191; these read GCS and DN.

It belongs to the class I-like SAM-binding methyltransferase superfamily. Cx-SAM synthase family. In terms of assembly, homodimer.

The enzyme catalyses prephenate + S-adenosyl-L-methionine = carboxy-S-adenosyl-L-methionine + 3-phenylpyruvate + H2O. Functionally, catalyzes the conversion of S-adenosyl-L-methionine (SAM) to carboxy-S-adenosyl-L-methionine (Cx-SAM). The sequence is that of Carboxy-S-adenosyl-L-methionine synthase from Campylobacter jejuni subsp. jejuni serotype O:6 (strain 81116 / NCTC 11828).